A 138-amino-acid polypeptide reads, in one-letter code: Large ribosomal subunit protein bL19 (138 aa).

Belongs to the bacterial ribosomal protein bL19 family.

Functionally, this protein is located at the 30S-50S ribosomal subunit interface and may play a role in the structure and function of the aminoacyl-tRNA binding site. This chain is Large ribosomal subunit protein bL19, found in Rickettsia felis (strain ATCC VR-1525 / URRWXCal2) (Rickettsia azadi).